Reading from the N-terminus, the 809-residue chain is Probable disease resistance protein At5g66900 (809 aa).

The region spanning 1–150 (MNDWASLGIG…LSKRMDLLSV (150 aa)) is the RPW8 domain. Residues 50 to 86 (PLTQKIDSMQKELDFGVKELKELRDTIERADVAVRKF) are a coiled coil. NB-ARC domains follow at residues 153 to 280 (PVFR…DDVW) and 339 to 438 (SPDE…DMWV). 194-201 (APPGCGKT) provides a ligand contact to ATP. The stretch at 494–515 (QSEFKENLERKRLNLEILENTF) forms a coiled coil. LRR repeat units follow at residues 650–672 (KLQE…ISEI), 674–696 (SLKT…IGNL), 698–720 (RLEV…TEGL), and 722–744 (NLRF…IGKL).

The protein belongs to the disease resistance NB-LRR family.

Its function is as follows. Probable disease resistance protein. In Arabidopsis thaliana (Mouse-ear cress), this protein is Probable disease resistance protein At5g66900.